A 112-amino-acid chain; its full sequence is MVAAIIAGAAVAAAAYAGKYGIEAWQAFKLRPVRPRMRKFYEGGFQATMNRREAALILGVRESVAAEKVKEAHRRVMVANHPDAGGSHYLASKINEAKDMMLGKTKNSGSAF.

A helical membrane pass occupies residues 7–25 (AGAAVAAAAYAGKYGIEAW). The 60-residue stretch at 53–112 (EAALILGVRESVAAEKVKEAHRRVMVANHPDAGGSHYLASKINEAKDMMLGKTKNSGSAF) folds into the J domain.

It belongs to the TIM14 family. Probable component of the PAM complex at least composed of a mitochondrial HSP70 protein, TIMM44 and TIMM14. The complex interacts with the TIMM23 component of the TIM17:23 complex.

The protein localises to the mitochondrion. It localises to the mitochondrion inner membrane. In terms of biological role, component of the PAM complex, a complex required for the translocation of transit peptide-containing proteins from the inner membrane into the mitochondrial matrix in an ATP-dependent manner. This is Mitochondrial import inner membrane translocase subunit TIM14-2 (TIM14-2) from Arabidopsis thaliana (Mouse-ear cress).